An 88-amino-acid polypeptide reads, in one-letter code: Alpha-latrotoxin associated low molecular weight protein (88 aa).

A signal peptide spans 1 to 18; the sequence is MSKLFFVAFLCLIISVFA.

The protein belongs to the arthropod CHH/MIH/GIH/VIH hormone family. As to expression, expressed by the venom gland.

It is found in the secreted. Functionally, may increase the toxicity of alpha-latrotoxin and/or other venom components. Is non-toxic to mice and to the cockroach Periplaneta americana. The chain is Alpha-latrotoxin associated low molecular weight protein from Latrodectus hesperus (Western black widow spider).